A 264-amino-acid polypeptide reads, in one-letter code: Putative hydro-lyase Bpet2233 (264 aa).

Belongs to the D-glutamate cyclase family.

This Bordetella petrii (strain ATCC BAA-461 / DSM 12804 / CCUG 43448) protein is Putative hydro-lyase Bpet2233.